The chain runs to 300 residues: tRNA pseudouridine synthase B (300 aa).

The Nucleophile role is filled by Asp-41.

It belongs to the pseudouridine synthase TruB family. Type 1 subfamily.

The catalysed reaction is uridine(55) in tRNA = pseudouridine(55) in tRNA. Its function is as follows. Responsible for synthesis of pseudouridine from uracil-55 in the psi GC loop of transfer RNAs. This chain is tRNA pseudouridine synthase B, found in Synechococcus sp. (strain WH7803).